Here is a 183-residue protein sequence, read N- to C-terminus: Ribosome maturation factor RimM (183 aa).

Positions 103–183 constitute a PRC barrel domain; the sequence is EEGDYYWKDL…SIEVDWDPGF (81 aa).

Belongs to the RimM family. Binds ribosomal protein uS19.

The protein resides in the cytoplasm. Its function is as follows. An accessory protein needed during the final step in the assembly of 30S ribosomal subunit, possibly for assembly of the head region. Essential for efficient processing of 16S rRNA. May be needed both before and after RbfA during the maturation of 16S rRNA. It has affinity for free ribosomal 30S subunits but not for 70S ribosomes. This chain is Ribosome maturation factor RimM, found in Escherichia coli O157:H7 (strain EC4115 / EHEC).